The sequence spans 161 residues: MADGLDFTGMLRSAGLRITRPRLAVLNAVKEHPHAETDHVIRAVRVQLPDVSHQTVYDXLNALTAAGLVRRIQPTGSVARYETRVNDNHHHVVCRSCGAIADVDCAVGDAPCLTAADDNGFDIDEAEVIYWASALTARDLRVLDDSPVAHQMKGKAMPPNT.

The Zn(2+) site is built by cysteine 94 and cysteine 97.

It belongs to the Fur family.

The protein resides in the cytoplasm. In terms of biological role, acts as a global negative controlling element, employing Fe(2+) as a cofactor to bind the operator of the repressed genes. The sequence is that of Ferric uptake regulation protein 1 (fur1) from Mycolicibacterium fortuitum (Mycobacterium fortuitum).